The following is a 500-amino-acid chain: L-arabinose isomerase (500 aa).

Residues glutamate 306, glutamate 333, histidine 350, and histidine 450 each coordinate Mn(2+).

Belongs to the arabinose isomerase family. In terms of assembly, homohexamer. Requires Mn(2+) as cofactor.

It carries out the reaction beta-L-arabinopyranose = L-ribulose. Its pathway is carbohydrate degradation; L-arabinose degradation via L-ribulose; D-xylulose 5-phosphate from L-arabinose (bacterial route): step 1/3. Catalyzes the conversion of L-arabinose to L-ribulose. This Yersinia pestis (strain Pestoides F) protein is L-arabinose isomerase.